Reading from the N-terminus, the 488-residue chain is Ribulose bisphosphate carboxylase large chain (488 aa).

2 residues coordinate substrate: N128 and T178. K180 functions as the Proton acceptor in the catalytic mechanism. Residue K182 coordinates substrate. 3 residues coordinate Mg(2+): K206, D208, and E209. Position 206 is an N6-carboxylysine (K206). The active-site Proton acceptor is the H298. Substrate is bound by residues R299, H331, and S383.

This sequence belongs to the RuBisCO large chain family. Type I subfamily. Heterohexadecamer of 8 large chains and 8 small chains. The cofactor is Mg(2+).

It catalyses the reaction 2 (2R)-3-phosphoglycerate + 2 H(+) = D-ribulose 1,5-bisphosphate + CO2 + H2O. The enzyme catalyses D-ribulose 1,5-bisphosphate + O2 = 2-phosphoglycolate + (2R)-3-phosphoglycerate + 2 H(+). RuBisCO catalyzes two reactions: the carboxylation of D-ribulose 1,5-bisphosphate, the primary event in carbon dioxide fixation, as well as the oxidative fragmentation of the pentose substrate. Both reactions occur simultaneously and in competition at the same active site. This Xanthobacter flavus protein is Ribulose bisphosphate carboxylase large chain.